A 1098-amino-acid polypeptide reads, in one-letter code: Ran-binding protein 16 (1098 aa).

The protein belongs to the exportin family. Binds to nucleoporins and the GTP-bound form of Ran.

It is found in the cytoplasm. Its subcellular location is the nucleus. May function as a nuclear transport receptor. The chain is Ran-binding protein 16 (Ranbp16) from Drosophila melanogaster (Fruit fly).